A 943-amino-acid chain; its full sequence is Sodium- and chloride-dependent GABA transporter ine (943 aa).

The Cytoplasmic segment spans residues 1–345; sequence MAENKDVSQV…RQQHWANKMQ (345 aa). Residues 103-122 form a disordered region; that stretch reads HKQSPLRHTSVRTRPSSEVL. A run of 3 helical transmembrane segments spans residues 346-366, 373-393, and 418-438; these read FVLA…FPYM, GVFL…LLFM, and GAGL…SVII. The Extracellular portion of the chain corresponds to 439 to 510; that stretch reads GYSIYYFFTS…GLEYPGMMRW (72 aa). Asn-476 carries N-linked (GlcNAc...) asparagine glycosylation. 9 helical membrane-spanning segments follow: residues 511–531, 539–559, 591–607, 618–638, 679–699, 723–743, 754–774, 799–819, and 836–856; these read ELFA…WKSI, YFTA…AVTL, FNSL…FASY, TVAV…FAFS, WAVM…FAIV, IVVL…IIQG, YAAS…IAWF, CWLV…LINY, and YGIG…YAVI. Over 857–943 the chain is Cytoplasmic; sequence NFLRSSGDTF…HAEAGGPCGQ (87 aa).

This sequence belongs to the sodium:neurotransmitter symporter (SNF) (TC 2.A.22) family. Expressed both maternally and zygotically. Developing embryos exhibit expression in the posterior hindgut, foregut, midgut, Malpighian tubules, anal plate, Garland cells, and a subset of cells in the central nervous system. Central nervous system expression is seen in segmentally repeating in cells flanking the midline of the ventral ganglion. Isoform A and isoform B are colocalized in both the nervous system and the fluid reabsorption system.

It is found in the membrane. In terms of biological role, plays a role in neuronal membrane excitation, important for normal response properties of the photoreceptor. Able to control excitability from either neurons or glia cells. Ine negatively regulates neuronal sodium channels. Controls neurotransmitter-mediated signaling pathways associated with the structure of the larval peripheral nerve, ine and eag control perineurial glial growth through partially redundant pathways. Isoform A and isoform B are both functional, although isoform A functions with greater efficiency. Has a role in osmolyte transport within the Malpighian tubule and hindgut. The protein is Sodium- and chloride-dependent GABA transporter ine of Drosophila melanogaster (Fruit fly).